The sequence spans 727 residues: Phosphoribosylformylglycinamidine synthase subunit PurL (727 aa).

The active site involves His-47. Tyr-50 and Lys-82 together coordinate ATP. Glu-84 serves as a coordination point for Mg(2+). Substrate is bound by residues 85 to 88 and Arg-107; that span reads SHNH. His-86 serves as the catalytic Proton acceptor. Asp-108 provides a ligand contact to Mg(2+). Residue Gln-229 coordinates substrate. Asp-257 is a Mg(2+) binding site. Substrate is bound at residue 301–303; it reads ESQ. ATP contacts are provided by Asp-486 and Gly-523. Asn-524 is a binding site for Mg(2+). Ser-526 contributes to the substrate binding site.

This sequence belongs to the FGAMS family. In terms of assembly, monomer. Part of the FGAM synthase complex composed of 1 PurL, 1 PurQ and 2 PurS subunits.

It localises to the cytoplasm. The catalysed reaction is N(2)-formyl-N(1)-(5-phospho-beta-D-ribosyl)glycinamide + L-glutamine + ATP + H2O = 2-formamido-N(1)-(5-O-phospho-beta-D-ribosyl)acetamidine + L-glutamate + ADP + phosphate + H(+). Its pathway is purine metabolism; IMP biosynthesis via de novo pathway; 5-amino-1-(5-phospho-D-ribosyl)imidazole from N(2)-formyl-N(1)-(5-phospho-D-ribosyl)glycinamide: step 1/2. Functionally, part of the phosphoribosylformylglycinamidine synthase complex involved in the purines biosynthetic pathway. Catalyzes the ATP-dependent conversion of formylglycinamide ribonucleotide (FGAR) and glutamine to yield formylglycinamidine ribonucleotide (FGAM) and glutamate. The FGAM synthase complex is composed of three subunits. PurQ produces an ammonia molecule by converting glutamine to glutamate. PurL transfers the ammonia molecule to FGAR to form FGAM in an ATP-dependent manner. PurS interacts with PurQ and PurL and is thought to assist in the transfer of the ammonia molecule from PurQ to PurL. The protein is Phosphoribosylformylglycinamidine synthase subunit PurL of Petrotoga mobilis (strain DSM 10674 / SJ95).